A 177-amino-acid polypeptide reads, in one-letter code: B-phycoerythrin beta chain (177 aa).

The (2R,3E)-phycoerythrobilin site is built by Cys50 and Cys61. Asn72 is modified (N4-methylasparagine). Residues Cys82 and Cys158 each contribute to the (2R,3E)-phycoerythrobilin site.

It belongs to the phycobiliprotein family. As to quaternary structure, heterotetramer of one alpha-1, one alpha-2, and two beta chains. Post-translationally, contains three covalently linked bilin chromophores.

The protein resides in the plastid. It is found in the chloroplast thylakoid membrane. Its function is as follows. Light-harvesting photosynthetic bile pigment-protein from the phycobiliprotein complex. This Guillardia theta (Cryptophyte) protein is B-phycoerythrin beta chain (cpeB).